Here is a 1673-residue protein sequence, read N- to C-terminus: NBPF family member NBPF26 (1673 aa).

EGF-like domains are found at residues 24 to 63 (HALQCRDGYEPCVNKGMCVTYHSGTGYCKCPEGFLGEYCQ), 64 to 102 (HRDPCEKNRCQNGGTCVAQAMLGKATCRCASGFTGEDCQ), 105 to 143 (TPHPCFVSRPCLNGGTCHMLSRDTYECTCQVGFTGKECQ), and 144 to 180 (WTDACLSHLCANGSTCTTVANQFSCKCLTGFTGQKCE). 17 disulfides stabilise this stretch: Cys-28/Cys-41, Cys-35/Cys-51, Cys-53/Cys-62, Cys-68/Cys-79, Cys-73/Cys-90, Cys-92/Cys-101, Cys-109/Cys-121, Cys-115/Cys-131, Cys-133/Cys-142, Cys-148/Cys-159, Cys-153/Cys-168, Cys-170/Cys-179, Cys-186/Cys-198, Cys-192/Cys-207, Cys-209/Cys-218, Cys-225/Cys-236, and Cys-230/Cys-246. One can recognise an EGF-like 5; calcium-binding domain in the interval 182–219 (DVNECDIPGHCQHGGTCLNLPGSYQCQCLQGFTGQYCD). An EGF-like 6 domain is found at 221–258 (LYVPCAHSPCVNGGTCRQTGDFTFECNCLPVPDSTSSA). The stretch at 337 to 381 (RQFKEEKLAEQLKQAEELRQYKVLVHSQERELTQLKEKLREGRDA) forms a coiled coil. Disordered regions lie at residues 423–463 (KLSP…KVPE), 713–734 (EKVQKSSAPREMQKAEEKEVPE), and 782–828 (WEDA…EGYS). Acidic residues predominate over residues 427 to 443 (ENDEDEDEDVQVEEDEK). Olduvai domains lie at 427–521 (ENDE…NILP), 698–790 (ENDN…HIIP), 791–879 (ENES…ATGP), 882–937 (SREL…VDMD), 938–1029 (EIEK…PSCP), 1032–1104 (SGEL…PSCP), 1107–1162 (SREL…LDVD), 1163–1255 (RIKK…RSKK), 1256–1348 (ERRR…PSCP), 1351–1423 (SREL…PSCP), 1426–1481 (SREL…LDVD), 1482–1574 (RIKK…RSKK), and 1575–1673 (ERRR…IFPQ). The segment covering 452–463 (EVQKTEESKVPE) has biased composition (basic and acidic residues). Acidic residues-rich tracts occupy residues 792 to 801 (NESDDEEEEE) and 812 to 824 (ESEEEEVPQESWD). Residues 1242–1280 (KGKGKKRRGRRSKKERRRGRKEGEEDQNPPCPRLSRELL) are disordered. Positions 1243–1261 (GKGKKRRGRRSKKERRRGR) are enriched in basic residues. The disordered stretch occupies residues 1561–1594 (KGKGKKRRGRRSKKERRRGRKEGEEDQNPPCPRL). Over residues 1562 to 1580 (GKGKKRRGRRSKKERRRGR) the composition is skewed to basic residues.

The protein belongs to the NBPF family.

It is found in the cytoplasm. This is NBPF family member NBPF26 from Homo sapiens (Human).